A 114-amino-acid polypeptide reads, in one-letter code: Small ribosomal subunit protein uS15 (114 aa).

It belongs to the universal ribosomal protein uS15 family.

The polypeptide is Small ribosomal subunit protein uS15 (RpS13) (Musca domestica (House fly)).